The sequence spans 856 residues: Bifunctional uridylyltransferase/uridylyl-removing enzyme (856 aa).

The segment at 1–320 (MTLSAAPLQH…YCQVPRVTQH (320 aa)) is uridylyltransferase. A uridylyl-removing region spans residues 321-678 (ISEYFHAVNG…ARLADDHEGL (358 aa)). Positions 439 to 561 (VDEHILMVVR…VRTPRRLAAL (123 aa)) constitute an HD domain. 2 consecutive ACT domains span residues 679 to 760 (QVLI…LPPQ) and 788 to 856 (ILSI…ALRI).

This sequence belongs to the GlnD family. It depends on Mg(2+) as a cofactor.

The enzyme catalyses [protein-PII]-L-tyrosine + UTP = [protein-PII]-uridylyl-L-tyrosine + diphosphate. It catalyses the reaction [protein-PII]-uridylyl-L-tyrosine + H2O = [protein-PII]-L-tyrosine + UMP + H(+). Its activity is regulated as follows. Uridylyltransferase (UTase) activity is inhibited by glutamine, while glutamine activates uridylyl-removing (UR) activity. Functionally, modifies, by uridylylation and deuridylylation, the PII regulatory proteins (GlnB and homologs), in response to the nitrogen status of the cell that GlnD senses through the glutamine level. Under low glutamine levels, catalyzes the conversion of the PII proteins and UTP to PII-UMP and PPi, while under higher glutamine levels, GlnD hydrolyzes PII-UMP to PII and UMP (deuridylylation). Thus, controls uridylylation state and activity of the PII proteins, and plays an important role in the regulation of nitrogen assimilation and metabolism. The polypeptide is Bifunctional uridylyltransferase/uridylyl-removing enzyme (Chromobacterium violaceum (strain ATCC 12472 / DSM 30191 / JCM 1249 / CCUG 213 / NBRC 12614 / NCIMB 9131 / NCTC 9757 / MK)).